A 42-amino-acid polypeptide reads, in one-letter code: Photosystem I reaction center subunit IX (42 aa).

Residues 8–28 (YLSTIPVVGAIWLTFTAGFII) traverse the membrane as a helical segment.

Belongs to the PsaJ family.

The protein localises to the plastid. It localises to the chloroplast thylakoid membrane. In terms of biological role, may help in the organization of the PsaE and PsaF subunits. The sequence is that of Photosystem I reaction center subunit IX from Gracilaria tenuistipitata var. liui (Red alga).